The sequence spans 127 residues: Ribosome-binding factor A (127 aa).

It belongs to the RbfA family. Monomer. Binds 30S ribosomal subunits, but not 50S ribosomal subunits or 70S ribosomes.

Its subcellular location is the cytoplasm. Functionally, one of several proteins that assist in the late maturation steps of the functional core of the 30S ribosomal subunit. Associates with free 30S ribosomal subunits (but not with 30S subunits that are part of 70S ribosomes or polysomes). Required for efficient processing of 16S rRNA. May interact with the 5'-terminal helix region of 16S rRNA. The polypeptide is Ribosome-binding factor A (Stenotrophomonas maltophilia (strain K279a)).